A 309-amino-acid polypeptide reads, in one-letter code: Homoserine O-succinyltransferase (309 aa).

Cys-142 functions as the Acyl-thioester intermediate in the catalytic mechanism. Substrate contacts are provided by Lys-163 and Ser-192. His-235 acts as the Proton acceptor in catalysis. Residue Glu-237 is part of the active site. A substrate-binding site is contributed by Arg-249.

It belongs to the MetA family. As to quaternary structure, homodimer.

It localises to the cytoplasm. It carries out the reaction L-homoserine + succinyl-CoA = O-succinyl-L-homoserine + CoA. It functions in the pathway amino-acid biosynthesis; L-methionine biosynthesis via de novo pathway; O-succinyl-L-homoserine from L-homoserine: step 1/1. In terms of biological role, transfers a succinyl group from succinyl-CoA to L-homoserine, forming succinyl-L-homoserine. This Escherichia coli (strain K12 / MC4100 / BW2952) protein is Homoserine O-succinyltransferase.